Reading from the N-terminus, the 106-residue chain is Violacin-A (106 aa).

The first 29 residues, Met1–Ala29, serve as a signal peptide directing secretion. The propeptide occupies Val30–Asp79. 3 disulfides stabilise this stretch: Cys84/Cys98, Cys88/Cys100, and Cys93/Cys105.

The protein belongs to the cyclotide family. Moebius subfamily. Post-translationally, violacin-A is not a cyclic peptide.

In terms of biological role, probably participates in a plant defense mechanism. Has low hemolytic activity. In Viola odorata (Sweet violet), this protein is Violacin-A.